The following is a 380-amino-acid chain: UPF0754 membrane protein Bsph_0374 (380 aa).

2 consecutive transmembrane segments (helical) span residues 1–21 (MDNF…IGGV) and 357–377 (MITV…GLIV).

Belongs to the UPF0754 family.

Its subcellular location is the cell membrane. This Lysinibacillus sphaericus (strain C3-41) protein is UPF0754 membrane protein Bsph_0374.